Here is a 271-residue protein sequence, read N- to C-terminus: Phosphatidylglycerol--prolipoprotein diacylglyceryl transferase (271 aa).

7 helical membrane-spanning segments follow: residues 25–45, 60–80, 103–123, 134–154, 181–201, 209–229, and 235–255; these read WYGI…KFFV, YFIW…ILIY, FVGI…IATL, WIFL…GRIG, PSQL…VYLA, GELI…CEFY, and GIGF…IMFI. Residue Arg-152 coordinates a 1,2-diacyl-sn-glycero-3-phospho-(1'-sn-glycerol).

It belongs to the Lgt family.

The protein resides in the cell inner membrane. It carries out the reaction L-cysteinyl-[prolipoprotein] + a 1,2-diacyl-sn-glycero-3-phospho-(1'-sn-glycerol) = an S-1,2-diacyl-sn-glyceryl-L-cysteinyl-[prolipoprotein] + sn-glycerol 1-phosphate + H(+). The protein operates within protein modification; lipoprotein biosynthesis (diacylglyceryl transfer). In terms of biological role, catalyzes the transfer of the diacylglyceryl group from phosphatidylglycerol to the sulfhydryl group of the N-terminal cysteine of a prolipoprotein, the first step in the formation of mature lipoproteins. In Campylobacter jejuni subsp. jejuni serotype O:23/36 (strain 81-176), this protein is Phosphatidylglycerol--prolipoprotein diacylglyceryl transferase.